A 297-amino-acid chain; its full sequence is Tyrosine recombinase XerD (297 aa).

Positions 1-86 constitute a Core-binding (CB) domain; the sequence is MNDLIDDFLH…SLRSFFHYLM (86 aa). Residues 107–291 form the Tyr recombinase domain; sequence SLPKVLNLDD…TKLRLKDVYK (185 aa). Active-site residues include Arg-147, Lys-171, His-243, Arg-246, and His-269. The O-(3'-phospho-DNA)-tyrosine intermediate role is filled by Tyr-278.

The protein belongs to the 'phage' integrase family. XerD subfamily. Forms a cyclic heterotetrameric complex composed of two molecules of XerC and two molecules of XerD.

It localises to the cytoplasm. In terms of biological role, site-specific tyrosine recombinase, which acts by catalyzing the cutting and rejoining of the recombining DNA molecules. The XerC-XerD complex is essential to convert dimers of the bacterial chromosome into monomers to permit their segregation at cell division. It also contributes to the segregational stability of plasmids. In Listeria innocua serovar 6a (strain ATCC BAA-680 / CLIP 11262), this protein is Tyrosine recombinase XerD.